The chain runs to 466 residues: Ferrochelatase-1, chloroplastic/mitochondrial (466 aa).

The segment covering 1-11 (MQATALSSGFN) has biased composition (polar residues). The tract at residues 1-23 (MQATALSSGFNPLTKRKDHRFPR) is disordered. The transit peptide at 1 to 35 (MQATALSSGFNPLTKRKDHRFPRSCSQRNSLSLIQ) directs the protein to the chloroplast and mitochondrion.

It belongs to the ferrochelatase family. In terms of tissue distribution, expressed in roots, leaves, stems and flowers. Present in both leaves and roots.

Its subcellular location is the plastid. The protein localises to the chloroplast membrane. The protein resides in the chloroplast thylakoid membrane. It localises to the mitochondrion. The catalysed reaction is heme b + 2 H(+) = protoporphyrin IX + Fe(2+). It functions in the pathway porphyrin-containing compound metabolism; protoheme biosynthesis; protoheme from protoporphyrin-IX: step 1/1. Its function is as follows. Catalyzes the last step of heme biosynthesis by inserting ferrous iron into protoporphyrin IX to produce protoheme. Produces heme for photosynthetic cytochromes, but does not seem to be involved in stress responses. May be involved in wound-induced supply of heme to defensive hemoproteins outside plastids. Regulates the expression of photosynthesis-associated nuclear genes in undeveloped chloroplasts through production of heme. The sequence is that of Ferrochelatase-1, chloroplastic/mitochondrial from Arabidopsis thaliana (Mouse-ear cress).